The sequence spans 234 residues: Ribosome-inactivating protein lychnin (234 aa).

Cys-32 and Cys-115 are disulfide-bonded. Residue Glu-170 is part of the active site.

As to quaternary structure, monomer.

The enzyme catalyses Endohydrolysis of the N-glycosidic bond at one specific adenosine on the 28S rRNA.. Ribosome-inactivating protein of type 1, inhibits protein synthesis in animal cells. Inhibits cell-free translation in rabbit reticulocyte lysate system with an IC(50) of 0.17 nM. This chain is Ribosome-inactivating protein lychnin, found in Silene chalcedonica (Maltese-cross).